The chain runs to 270 residues: 4-hydroxy-tetrahydrodipicolinate reductase (270 aa).

7–12 serves as a coordination point for NAD(+); it reads GVSGRM. R34 contacts NADP(+). NAD(+)-binding positions include 97–99 and 121–124; these read GTT and SGNM. The Proton donor/acceptor role is filled by H155. Position 156 (H156) interacts with (S)-2,3,4,5-tetrahydrodipicolinate. The active-site Proton donor is K159. 165–166 contributes to the (S)-2,3,4,5-tetrahydrodipicolinate binding site; the sequence is GT.

The protein belongs to the DapB family.

It is found in the cytoplasm. It catalyses the reaction (S)-2,3,4,5-tetrahydrodipicolinate + NAD(+) + H2O = (2S,4S)-4-hydroxy-2,3,4,5-tetrahydrodipicolinate + NADH + H(+). The catalysed reaction is (S)-2,3,4,5-tetrahydrodipicolinate + NADP(+) + H2O = (2S,4S)-4-hydroxy-2,3,4,5-tetrahydrodipicolinate + NADPH + H(+). It participates in amino-acid biosynthesis; L-lysine biosynthesis via DAP pathway; (S)-tetrahydrodipicolinate from L-aspartate: step 4/4. Functionally, catalyzes the conversion of 4-hydroxy-tetrahydrodipicolinate (HTPA) to tetrahydrodipicolinate. In Allorhizobium ampelinum (strain ATCC BAA-846 / DSM 112012 / S4) (Agrobacterium vitis (strain S4)), this protein is 4-hydroxy-tetrahydrodipicolinate reductase.